Here is a 113-residue protein sequence, read N- to C-terminus: Hydrogenase maturation factor HypA (113 aa).

Histidine 2 contributes to the Ni(2+) binding site. Positions 73, 76, 89, and 92 each coordinate Zn(2+).

It belongs to the HypA/HybF family.

Involved in the maturation of [NiFe] hydrogenases. Required for nickel insertion into the metal center of the hydrogenase. The sequence is that of Hydrogenase maturation factor HypA from Dechloromonas aromatica (strain RCB).